The primary structure comprises 170 residues: Cytochrome b6-f complex subunit 4 (170 aa).

The next 3 membrane-spanning stretches (helical) occupy residues 36-56 (LLYI…GLAV), 95-115 (LLGV…PFLE), and 131-151 (TVFL…TLPI).

This sequence belongs to the cytochrome b family. PetD subfamily. The 4 large subunits of the cytochrome b6-f complex are cytochrome b6, subunit IV (17 kDa polypeptide, petD), cytochrome f and the Rieske protein, while the 4 small subunits are petG, petL, petM and petN. The complex functions as a dimer.

It is found in the plastid. The protein localises to the chloroplast thylakoid membrane. Component of the cytochrome b6-f complex, which mediates electron transfer between photosystem II (PSII) and photosystem I (PSI), cyclic electron flow around PSI, and state transitions. This chain is Cytochrome b6-f complex subunit 4, found in Nymphaea alba (White water-lily).